We begin with the raw amino-acid sequence, 184 residues long: NADH-quinone oxidoreductase subunit B (184 aa).

Residues Cys63, Cys64, Cys128, and Cys158 each contribute to the [4Fe-4S] cluster site.

It belongs to the complex I 20 kDa subunit family. NDH-1 is composed of 14 different subunits. Subunits NuoB, C, D, E, F, and G constitute the peripheral sector of the complex. [4Fe-4S] cluster is required as a cofactor.

It localises to the cell inner membrane. It carries out the reaction a quinone + NADH + 5 H(+)(in) = a quinol + NAD(+) + 4 H(+)(out). NDH-1 shuttles electrons from NADH, via FMN and iron-sulfur (Fe-S) centers, to quinones in the respiratory chain. The immediate electron acceptor for the enzyme in this species is believed to be ubiquinone. Couples the redox reaction to proton translocation (for every two electrons transferred, four hydrogen ions are translocated across the cytoplasmic membrane), and thus conserves the redox energy in a proton gradient. The chain is NADH-quinone oxidoreductase subunit B from Xanthomonas axonopodis pv. citri (strain 306).